We begin with the raw amino-acid sequence, 270 residues long: Tetraspanin-17 (270 aa).

Over 1–19 (MPGKHQHFQEPEVGCCGKY) the chain is Cytoplasmic. A helical membrane pass occupies residues 20 to 40 (FLFGFNIVFWVLGALFLAIGL). Over 41–63 (WAWGEKGVLSNISALTDLGGLDP) the chain is Extracellular. Asn51 carries N-linked (GlcNAc...) asparagine glycosylation. The helical transmembrane segment at 64 to 84 (VWLFVVVGGVMSVLGFAGCIG) threads the bilayer. The Cytoplasmic segment spans residues 85-94 (ALRENTFLLK). A helical membrane pass occupies residues 95-115 (FFSVFLGLIFFLELATGILAF). The Extracellular segment spans residues 116–234 (VFKDWIRDQL…GQFEKWLQDN (119 aa)). Disulfide bonds link Cys155-Cys223, Cys156-Cys188, Cys172-Cys182, and Cys189-Cys202. N-linked (GlcNAc...) asparagine glycosylation occurs at Asn171. A helical transmembrane segment spans residues 235-255 (LIVVAGVFMGIALLQIFGICL). Topologically, residues 256–270 (AQNLVSDIKAVKANW) are cytoplasmic.

This sequence belongs to the tetraspanin (TM4SF) family. As to quaternary structure, interacts with ADAM10; the interaction influences ADAM10 substrate specificity, endocytosis and turnover.

It is found in the cell membrane. Functionally, part of TspanC8 subgroup, composed of 6 members that interact with the transmembrane metalloprotease ADAM10. This interaction is required for ADAM10 exit from the endoplasmic reticulum and for enzymatic maturation and trafficking to the cell surface as well as substrate specificity. Different TspanC8/ADAM10 complexes have distinct substrates. Seems to regulate VE-cadherin expression in endothelial cells probably through interaction with ADAM10, promoting leukocyte transmigration. The chain is Tetraspanin-17 from Homo sapiens (Human).